Here is a 736-residue protein sequence, read N- to C-terminus: Phosphoribosylformylglycinamidine synthase subunit PurL (736 aa).

Histidine 49 is an active-site residue. Positions 52 and 91 each coordinate ATP. Glutamate 93 contributes to the Mg(2+) binding site. Residues 94–97 (SHNH) and arginine 116 each bind substrate. Histidine 95 serves as the catalytic Proton acceptor. A Mg(2+)-binding site is contributed by aspartate 117. Glutamine 240 provides a ligand contact to substrate. Aspartate 268 serves as a coordination point for Mg(2+). A substrate-binding site is contributed by 312–314 (ESQ). Aspartate 493 and glycine 530 together coordinate ATP. Residue asparagine 531 participates in Mg(2+) binding. Serine 533 is a binding site for substrate.

Belongs to the FGAMS family. As to quaternary structure, monomer. Part of the FGAM synthase complex composed of 1 PurL, 1 PurQ and 2 PurS subunits.

It localises to the cytoplasm. The catalysed reaction is N(2)-formyl-N(1)-(5-phospho-beta-D-ribosyl)glycinamide + L-glutamine + ATP + H2O = 2-formamido-N(1)-(5-O-phospho-beta-D-ribosyl)acetamidine + L-glutamate + ADP + phosphate + H(+). It participates in purine metabolism; IMP biosynthesis via de novo pathway; 5-amino-1-(5-phospho-D-ribosyl)imidazole from N(2)-formyl-N(1)-(5-phospho-D-ribosyl)glycinamide: step 1/2. In terms of biological role, part of the phosphoribosylformylglycinamidine synthase complex involved in the purines biosynthetic pathway. Catalyzes the ATP-dependent conversion of formylglycinamide ribonucleotide (FGAR) and glutamine to yield formylglycinamidine ribonucleotide (FGAM) and glutamate. The FGAM synthase complex is composed of three subunits. PurQ produces an ammonia molecule by converting glutamine to glutamate. PurL transfers the ammonia molecule to FGAR to form FGAM in an ATP-dependent manner. PurS interacts with PurQ and PurL and is thought to assist in the transfer of the ammonia molecule from PurQ to PurL. This is Phosphoribosylformylglycinamidine synthase subunit PurL from Rhodopseudomonas palustris (strain HaA2).